Here is a 202-residue protein sequence, read N- to C-terminus: MNVAGLIVGLGNPGKEYERTRHNLGFMAVDALMEAAARETGGGCDQLSGGKKKYDLWRCRITPTGDPWLVAKPQTFMNLSGEAVLAIASYYRIKPDAILVVHDELDIPLGRMKFKTGGGNAGHNGLKSITQLLGTPDFHRLRLGIGRSPHGGETTNWVLGRLSGPEQTLLDTLLPAAVQAMTIFASQGAAAATQFANAYKPD.

Position 17 (Y17) interacts with tRNA. Catalysis depends on H22, which acts as the Proton acceptor. The tRNA site is built by F76, N78, and N124.

The protein belongs to the PTH family. Monomer.

Its subcellular location is the cytoplasm. It carries out the reaction an N-acyl-L-alpha-aminoacyl-tRNA + H2O = an N-acyl-L-amino acid + a tRNA + H(+). In terms of biological role, hydrolyzes ribosome-free peptidyl-tRNAs (with 1 or more amino acids incorporated), which drop off the ribosome during protein synthesis, or as a result of ribosome stalling. Functionally, catalyzes the release of premature peptidyl moieties from peptidyl-tRNA molecules trapped in stalled 50S ribosomal subunits, and thus maintains levels of free tRNAs and 50S ribosomes. This Nitratidesulfovibrio vulgaris (strain DSM 19637 / Miyazaki F) (Desulfovibrio vulgaris) protein is Peptidyl-tRNA hydrolase.